Here is a 67-residue protein sequence, read N- to C-terminus: Large ribosomal subunit protein uL29 (67 aa).

This sequence belongs to the universal ribosomal protein uL29 family.

This is Large ribosomal subunit protein uL29 from Methanosarcina barkeri (strain Fusaro / DSM 804).